The chain runs to 398 residues: Sphingosine 1-phosphate receptor 5 (398 aa).

Over 1 to 40 the chain is Extracellular; it reads MESGLLRPAPVSEVIVLHYNYTGKLRGARYQPGAGLRADA. Asn-20 is a glycosylation site (N-linked (GlcNAc...) asparagine). The helical transmembrane segment at 41–61 threads the bilayer; sequence VVCLAVCAFIVLENLAVLLVL. Over 62 to 70 the chain is Cytoplasmic; the sequence is GRHPRFHAP. The chain crosses the membrane as a helical span at residues 71–91; sequence MFLLLGSLTLSDLLAGAAYAA. Over 92–111 the chain is Extracellular; the sequence is NILLSGPLTLKLSPALWFAR. The helical transmembrane segment at 112–132 threads the bilayer; sequence EGGVFVALTASVLSLLAIALE. The Cytoplasmic segment spans residues 133 to 151; sequence RSLTMARRGPAPVSSRGRT. Residues 152-172 traverse the membrane as a helical segment; it reads LAMAAAAWGVSLLLGLLPALG. Residues 173 to 192 are Extracellular-facing; that stretch reads WNCLGRLDACSTVLPLYAKA. Residues 193–213 form a helical membrane-spanning segment; that stretch reads YVLFCVLAFVGILAAICALYA. The Cytoplasmic portion of the chain corresponds to 214-252; it reads RIYCQVRANARRLPARPGTAGTTSTRARRKPRSLALLRT. Residues 253-273 traverse the membrane as a helical segment; sequence LSVVLLAFVACWGPLFLLLLL. Residues 274–287 lie on the Extracellular side of the membrane; that stretch reads DVACPARTCPVLLQ. The chain crosses the membrane as a helical span at residues 288-308; sequence ADPFLGLAMANSLLNPIIYTL. Residues 309–398 lie on the Cytoplasmic side of the membrane; that stretch reads TNRDLRHALL…RTLVSEPAAD (90 aa). Residue Cys-323 is the site of S-palmitoyl cysteine attachment. The disordered stretch occupies residues 329 to 398; it reads GRDPSGSQQS…RTLVSEPAAD (70 aa). The span at 333–347 shows a compositional bias: low complexity; the sequence is SGSQQSASAAEASGG. A Phosphoserine modification is found at Ser-381.

It belongs to the G-protein coupled receptor 1 family. As to expression, widely expressed in the brain, most prominently in the corpus callosum, which is predominantly white matter. Detected in spleen, peripheral blood leukocytes, placenta, lung, aorta and fetal spleen. Low-level signal detected in many tissue extracts. Overexpressed in leukemic large granular lymphocytes. Isoform 1 is predominantly expressed in peripheral tissues. Isoform 2 is expressed in brain, spleen and peripheral blood leukocytes.

It is found in the cell membrane. Receptor for the lysosphingolipid sphingosine 1-phosphate (S1P). S1P is a bioactive lysophospholipid that elicits diverse physiological effect on most types of cells and tissues. Is coupled to both the G(i/0)alpha and G(12) subclass of heteromeric G-proteins. May play a regulatory role in the transformation of radial glial cells into astrocytes and may affect proliferative activity of these cells. In Homo sapiens (Human), this protein is Sphingosine 1-phosphate receptor 5 (S1PR5).